Consider the following 326-residue polypeptide: Ribosomal large subunit pseudouridine synthase D (326 aa).

Positions 18–91 constitute an S4 RNA-binding domain; sequence QRLDQALAEM…IPLDIVYEDE (74 aa). The active site involves aspartate 139.

Belongs to the pseudouridine synthase RluA family. As to quaternary structure, in late stage pre-50S ribosomal subunit interacts with ObgE and DarP(YjgA).

The protein localises to the cytoplasm. The enzyme catalyses uridine(1911/1915/1917) in 23S rRNA = pseudouridine(1911/1915/1917) in 23S rRNA. Functionally, responsible for synthesis of pseudouridine from uracil at positions 1911, 1915 and 1917 in 23S ribosomal RNA. Other positions are not modified. Uridine isomerization occurs as a late step during the assembly of the large ribosomal subunit. Member of a network of 50S ribosomal subunit biogenesis factors (ObgE, RluD, RsfS and DarP(YjgA)) which assembles along the 30S-50S interface, allowing 23S rRNA modification and preventing incorrect 23S rRNA structures from forming. The polypeptide is Ribosomal large subunit pseudouridine synthase D (Escherichia coli (strain K12)).